The sequence spans 354 residues: MNEAIIQLDHIDITFRQKKRVIEAVKDVTVHINQGDIYGIVGYSGAGKSTLVRVINLLQAPTNGKITVDGDVTFDQGKIQLSANALRQKRRDIGMIFQHFNLMAQKTAKENVAFALRHSSLSKTEKEHKVIELLELVGLSERADNYPAQLSGGQKQRVAIARALANDPKILISDEATSALDPKTTKQILALLQELNRKLGLTIVMITHEMQIVKDICNRVAVMQNGVLIEEGSVLDIFSNPKEALTQKFITTATGIDEALEKINQQDIVKHLPANALLAQLKYAGTSTDEPLLNSIYRQFEVTANILYGNIEILDHIPVGDMIVVLEGQAENILAAEKALHEAGVDVSILKRGA.

In terms of domain architecture, ABC transporter spans 8–250; the sequence is LDHIDITFRQ…PKEALTQKFI (243 aa). ATP is bound at residue 42–49; sequence GYSGAGKS.

Belongs to the ABC transporter superfamily. Methionine importer (TC 3.A.1.24) family. As to quaternary structure, the complex is composed of two ATP-binding proteins (MetN), two transmembrane proteins (MetI) and a solute-binding protein (MetQ).

The protein resides in the cell membrane. The enzyme catalyses L-methionine(out) + ATP + H2O = L-methionine(in) + ADP + phosphate + H(+). It carries out the reaction D-methionine(out) + ATP + H2O = D-methionine(in) + ADP + phosphate + H(+). In terms of biological role, part of the ABC transporter complex MetNIQ involved in methionine import. Responsible for energy coupling to the transport system. The polypeptide is Methionine import ATP-binding protein MetN (Streptococcus pyogenes serotype M6 (strain ATCC BAA-946 / MGAS10394)).